A 690-amino-acid chain; its full sequence is Protein hook (690 aa).

One can recognise a Calponin-homology (CH) domain in the interval 6 to 122; that stretch reads MEIYESLIRW…RLLQLILGCA (117 aa). Coiled-coil stretches lie at residues 134-515 and 546-577; these read QIME…HHAE and ETTQ…QAAD.

The protein belongs to the hook family. In terms of assembly, homodimer. Interacts with microtubules via its N-terminus.

The protein resides in the cytoplasm. It is found in the cytoskeleton. Its subcellular location is the endosome. Functionally, involved in endocytic trafficking. Probably acts as a cytoskeletal linker protein that tethers endosome vesicles to the cytoskeleton. The polypeptide is Protein hook (Anopheles gambiae (African malaria mosquito)).